We begin with the raw amino-acid sequence, 343 residues long: MTFKAEYIWIDGTEPTAKLRSKTKIITGQPAGLDALPIWGFDGSSTNQAEGHSSDCVLKPVFTCPDPIRGGDDILVLCEVLNIDLTPHASNTRAALAEVAERFAAQEPIFGIEQEYTFFQDGYPLGFPKGGFPAPQGGYYCGVGADEIFGRDVVEAHLDNCLKAGLAISGINAEVMPGQWEFQVGPVSPLEVSDHLWVARWLLYRTAEDFDVAATLDPKPVKGDWNGAGAHTNFSTKAMRESYDAIITAAESLGEGSKPLDHVKNYGAGIDDRLTGLHETAPWNEYSYGVSDRGASVRIPWQVEKDGKGYIEDRRPNANVDPYVVTRLLVDTCCSALEKAGQV.

Residues 3 to 87 (FKAEYIWIDG…CEVLNIDLTP (85 aa)) form the GS beta-grasp domain. The GS catalytic domain maps to 92–343 (TRAALAEVAE…CSALEKAGQV (252 aa)). Positions 113, 115, 174, and 181 each coordinate Mg(2+). Glutamate 279 is an L-glutamate binding site.

This sequence belongs to the glutamine synthetase family. As to quaternary structure, homooctamer and homotetramer. The cofactor is Mg(2+).

The protein resides in the cytoplasm. The catalysed reaction is L-glutamate + NH4(+) + ATP = L-glutamine + ADP + phosphate + H(+). In terms of biological role, catalyzes the ATP-dependent biosynthesis of glutamine from glutamate and ammonia. The chain is Glutamine synthetase from Streptomyces viridochromogenes.